The primary structure comprises 171 residues: MNDSLIFATEGFALNLNLFETNVINLAVVAFGLYKFLPNFLGGMLERRRSAILQDLKDAEDRLAKASESLKQAKLDLSSAEQKAGKIRTDCQARAEAIRLESEKRTVEEMARIKQGAASDLNVEAARVSGQLRREAAKLAIEKALSTLSGKLDDKAQDKFLKQSIKNIGDI.

A helical transmembrane segment spans residues 12-34; sequence FALNLNLFETNVINLAVVAFGLY.

It belongs to the ATPase B chain family. F-type ATPases have 2 components, F(1) - the catalytic core - and F(0) - the membrane proton channel. F(1) has five subunits: alpha(3), beta(3), gamma(1), delta(1), epsilon(1). F(0) has four main subunits: a(1), b(1), b'(1) and c(10-14). The alpha and beta chains form an alternating ring which encloses part of the gamma chain. F(1) is attached to F(0) by a central stalk formed by the gamma and epsilon chains, while a peripheral stalk is formed by the delta, b and b' chains.

Its subcellular location is the cellular thylakoid membrane. Functionally, f(1)F(0) ATP synthase produces ATP from ADP in the presence of a proton or sodium gradient. F-type ATPases consist of two structural domains, F(1) containing the extramembraneous catalytic core and F(0) containing the membrane proton channel, linked together by a central stalk and a peripheral stalk. During catalysis, ATP synthesis in the catalytic domain of F(1) is coupled via a rotary mechanism of the central stalk subunits to proton translocation. In terms of biological role, component of the F(0) channel, it forms part of the peripheral stalk, linking F(1) to F(0). The polypeptide is ATP synthase subunit b (Prochlorococcus marinus (strain SARG / CCMP1375 / SS120)).